The primary structure comprises 1104 residues: Isoleucine--tRNA ligase (1104 aa).

The 'HIGH' region motif lies at 48-58 (PYTTGRIHLGT). The 'KMSKS' region motif lies at 644-648 (KMSKS). Lys-647 serves as a coordination point for ATP.

The protein belongs to the class-I aminoacyl-tRNA synthetase family. IleS type 2 subfamily. Monomer. Requires Zn(2+) as cofactor.

The protein resides in the cytoplasm. The catalysed reaction is tRNA(Ile) + L-isoleucine + ATP = L-isoleucyl-tRNA(Ile) + AMP + diphosphate. Functionally, catalyzes the attachment of isoleucine to tRNA(Ile). As IleRS can inadvertently accommodate and process structurally similar amino acids such as valine, to avoid such errors it has two additional distinct tRNA(Ile)-dependent editing activities. One activity is designated as 'pretransfer' editing and involves the hydrolysis of activated Val-AMP. The other activity is designated 'posttransfer' editing and involves deacylation of mischarged Val-tRNA(Ile). This chain is Isoleucine--tRNA ligase, found in Methanocella arvoryzae (strain DSM 22066 / NBRC 105507 / MRE50).